Reading from the N-terminus, the 287-residue chain is 26S proteasome non-ATPase regulatory subunit 8 (287 aa).

At S43 the chain carries Phosphoserine. Positions 99–268 constitute a PCI domain; sequence PSFERYMAQL…QQKPEDTTIP (170 aa). A Glycyl lysine isopeptide (Lys-Gly) (interchain with G-Cter in SUMO2) cross-link involves residue K234.

Belongs to the proteasome subunit S14 family. In terms of assembly, component of the 19S proteasome regulatory particle complex. The 26S proteasome consists of a 20S core particle (CP) and two 19S regulatory subunits (RP). The regulatory particle is made of a lid composed of 9 subunits including PSMD8, a base containing 6 ATPases and few additional components. Interacts with DDI2. Interacts with TASOR.

Its function is as follows. Component of the 26S proteasome, a multiprotein complex involved in the ATP-dependent degradation of ubiquitinated proteins. This complex plays a key role in the maintenance of protein homeostasis by removing misfolded or damaged proteins, which could impair cellular functions, and by removing proteins whose functions are no longer required. Therefore, the proteasome participates in numerous cellular processes, including cell cycle progression, apoptosis, or DNA damage repair. The sequence is that of 26S proteasome non-ATPase regulatory subunit 8 (PSMD8) from Bos taurus (Bovine).